We begin with the raw amino-acid sequence, 315 residues long: tRNA dimethylallyltransferase (315 aa).

14–21 (GPTASGKT) is a binding site for ATP. 16-21 (TASGKT) lines the substrate pocket. Interaction with substrate tRNA regions lie at residues 39–42 (DSAL), 163–167 (QRIQR), and 248–253 (RCVGYR).

This sequence belongs to the IPP transferase family. Monomer. Requires Mg(2+) as cofactor.

The enzyme catalyses adenosine(37) in tRNA + dimethylallyl diphosphate = N(6)-dimethylallyladenosine(37) in tRNA + diphosphate. Catalyzes the transfer of a dimethylallyl group onto the adenine at position 37 in tRNAs that read codons beginning with uridine, leading to the formation of N6-(dimethylallyl)adenosine (i(6)A). The sequence is that of tRNA dimethylallyltransferase from Paraburkholderia xenovorans (strain LB400).